The following is a 373-amino-acid chain: Bifunctional enzyme IspD/IspF (373 aa).

The tract at residues 1 to 213 (MSDLTLVLLG…CLQKPSATKR (213 aa)) is 2-C-methyl-D-erythritol 4-phosphate cytidylyltransferase. Residues 213–373 (RIGNGLDVHA…TLHYFDWSEI (161 aa)) form a 2-C-methyl-D-erythritol 2,4-cyclodiphosphate synthase region. Residues aspartate 219 and histidine 221 each coordinate a divalent metal cation. Residues 219–221 (DVH) and 245–246 (HS) each bind 4-CDP-2-C-methyl-D-erythritol 2-phosphate. A divalent metal cation is bound at residue histidine 253. 4-CDP-2-C-methyl-D-erythritol 2-phosphate-binding positions include 267-269 (DIG), 272-276 (FPDSD), 343-346 (TTTE), phenylalanine 350, and arginine 353.

This sequence in the N-terminal section; belongs to the IspD/TarI cytidylyltransferase family. IspD subfamily. The protein in the C-terminal section; belongs to the IspF family. It depends on a divalent metal cation as a cofactor.

It catalyses the reaction 2-C-methyl-D-erythritol 4-phosphate + CTP + H(+) = 4-CDP-2-C-methyl-D-erythritol + diphosphate. The enzyme catalyses 4-CDP-2-C-methyl-D-erythritol 2-phosphate = 2-C-methyl-D-erythritol 2,4-cyclic diphosphate + CMP. The protein operates within isoprenoid biosynthesis; isopentenyl diphosphate biosynthesis via DXP pathway; isopentenyl diphosphate from 1-deoxy-D-xylulose 5-phosphate: step 2/6. It functions in the pathway isoprenoid biosynthesis; isopentenyl diphosphate biosynthesis via DXP pathway; isopentenyl diphosphate from 1-deoxy-D-xylulose 5-phosphate: step 4/6. In terms of biological role, bifunctional enzyme that catalyzes the formation of 4-diphosphocytidyl-2-C-methyl-D-erythritol from CTP and 2-C-methyl-D-erythritol 4-phosphate (MEP) (IspD), and catalyzes the conversion of 4-diphosphocytidyl-2-C-methyl-D-erythritol 2-phosphate (CDP-ME2P) to 2-C-methyl-D-erythritol 2,4-cyclodiphosphate (ME-CPP) with a corresponding release of cytidine 5-monophosphate (CMP) (IspF). This is Bifunctional enzyme IspD/IspF from Nitratiruptor sp. (strain SB155-2).